The chain runs to 265 residues: Putative cysteine-rich receptor-like protein kinase At4g11521 (265 aa).

Positions 1–23 are cleaved as a signal peptide; that stretch reads MMLNTLFLPIFLFFLITFDYVST. 2 consecutive Gnk2-homologous domains span residues 24–122 and 128–241; these read QTCF…NISF and MEPS…LYPF. Asparagine 34, asparagine 102, and asparagine 119 each carry an N-linked (GlcNAc...) asparagine glycan. An N-linked (GlcNAc...) asparagine glycan is attached at asparagine 247.

The protein belongs to the protein kinase superfamily. Ser/Thr protein kinase family. CRK subfamily.

The protein resides in the secreted. The chain is Putative cysteine-rich receptor-like protein kinase At4g11521 from Arabidopsis thaliana (Mouse-ear cress).